We begin with the raw amino-acid sequence, 199 residues long: N-(5'-phosphoribosyl)anthranilate isomerase (199 aa).

It belongs to the TrpF family.

It catalyses the reaction N-(5-phospho-beta-D-ribosyl)anthranilate = 1-(2-carboxyphenylamino)-1-deoxy-D-ribulose 5-phosphate. It participates in amino-acid biosynthesis; L-tryptophan biosynthesis; L-tryptophan from chorismate: step 3/5. This is N-(5'-phosphoribosyl)anthranilate isomerase from Lacticaseibacillus casei (strain BL23) (Lactobacillus casei).